Consider the following 323-residue polypeptide: Aspartate carbamoyltransferase catalytic subunit (323 aa).

Arg71 and Thr72 together coordinate carbamoyl phosphate. Lys99 serves as a coordination point for L-aspartate. The carbamoyl phosphate site is built by Arg121, His151, and Gln154. Positions 184 and 239 each coordinate L-aspartate. Residues Gly280 and Pro281 each coordinate carbamoyl phosphate.

The protein belongs to the aspartate/ornithine carbamoyltransferase superfamily. ATCase family. As to quaternary structure, heterododecamer (2C3:3R2) of six catalytic PyrB chains organized as two trimers (C3), and six regulatory PyrI chains organized as three dimers (R2).

The enzyme catalyses carbamoyl phosphate + L-aspartate = N-carbamoyl-L-aspartate + phosphate + H(+). The protein operates within pyrimidine metabolism; UMP biosynthesis via de novo pathway; (S)-dihydroorotate from bicarbonate: step 2/3. Its function is as follows. Catalyzes the condensation of carbamoyl phosphate and aspartate to form carbamoyl aspartate and inorganic phosphate, the committed step in the de novo pyrimidine nucleotide biosynthesis pathway. The protein is Aspartate carbamoyltransferase catalytic subunit of Cupriavidus taiwanensis (strain DSM 17343 / BCRC 17206 / CCUG 44338 / CIP 107171 / LMG 19424 / R1) (Ralstonia taiwanensis (strain LMG 19424)).